The chain runs to 323 residues: Non-structural protein 9 (323 aa).

Residues 1–142 are disordered; the sequence is MFTSSAAKTG…GGSRPSQERG (142 aa). Residues 33–49 show a composition bias toward low complexity; that stretch reads IDGSISSGPISTGPDSD. Over residues 99 to 115 the composition is skewed to polar residues; that stretch reads PNHTDIGTSLGQVTTKG.

Its subcellular location is the host cytoplasm. Its function is as follows. Constituent of viral factories. The chain is Non-structural protein 9 from Rice gall dwarf virus (RGDV).